The following is a 388-amino-acid chain: Yellow-related salivary protein SP03 (388 aa).

The first 18 residues, 1-18 (MKIFLCLIAVVSLQGVLA), serve as a signal peptide directing secretion. Residue asparagine 29 is glycosylated (N-linked (GlcNAc...) asparagine).

The protein belongs to the major royal jelly protein family. As to expression, female salivary gland (at protein level).

Its subcellular location is the secreted. Probably modulates blood feeding of sand flies on vertebrate species by binding and sequestering different mediators involved in the host response. Binds biogenic amines. Binds noradrenaline with medium affinity. Binds octopamine with low affinity. Poorly binds histamine, adrenaline and serotonin. The chain is Yellow-related salivary protein SP03 from Phlebotomus perniciosus (Phlebotomine sand fly).